Reading from the N-terminus, the 669-residue chain is DNA ligase (669 aa).

NAD(+) contacts are provided by residues 34–38 (DAEYD), 83–84 (SL), and glutamate 114. The active-site N6-AMP-lysine intermediate is the lysine 116. 4 residues coordinate NAD(+): arginine 137, glutamate 171, lysine 287, and lysine 311. Zn(2+) is bound by residues cysteine 405, cysteine 408, cysteine 423, and cysteine 428. One can recognise a BRCT domain in the interval 591-669 (NIASYFAGKT…EERFLQELNK (79 aa)).

The protein belongs to the NAD-dependent DNA ligase family. LigA subfamily. Mg(2+) serves as cofactor. The cofactor is Mn(2+).

It carries out the reaction NAD(+) + (deoxyribonucleotide)n-3'-hydroxyl + 5'-phospho-(deoxyribonucleotide)m = (deoxyribonucleotide)n+m + AMP + beta-nicotinamide D-nucleotide.. Its function is as follows. DNA ligase that catalyzes the formation of phosphodiester linkages between 5'-phosphoryl and 3'-hydroxyl groups in double-stranded DNA using NAD as a coenzyme and as the energy source for the reaction. It is essential for DNA replication and repair of damaged DNA. The protein is DNA ligase of Bacillus cytotoxicus (strain DSM 22905 / CIP 110041 / 391-98 / NVH 391-98).